The primary structure comprises 572 residues: Proline--tRNA ligase (572 aa).

This sequence belongs to the class-II aminoacyl-tRNA synthetase family. ProS type 1 subfamily. Homodimer.

It is found in the cytoplasm. The catalysed reaction is tRNA(Pro) + L-proline + ATP = L-prolyl-tRNA(Pro) + AMP + diphosphate. Its function is as follows. Catalyzes the attachment of proline to tRNA(Pro) in a two-step reaction: proline is first activated by ATP to form Pro-AMP and then transferred to the acceptor end of tRNA(Pro). As ProRS can inadvertently accommodate and process non-cognate amino acids such as alanine and cysteine, to avoid such errors it has two additional distinct editing activities against alanine. One activity is designated as 'pretransfer' editing and involves the tRNA(Pro)-independent hydrolysis of activated Ala-AMP. The other activity is designated 'posttransfer' editing and involves deacylation of mischarged Ala-tRNA(Pro). The misacylated Cys-tRNA(Pro) is not edited by ProRS. The polypeptide is Proline--tRNA ligase (Salmonella newport (strain SL254)).